The sequence spans 462 residues: uncharacterized protein (462 aa).

Residues 12–70 enclose the TRAM domain; sequence MLKKNDIIQVAISDLSHEGAGVAKHDGFVFFVDNALPEEVIDMRVLKVNKNSGFGKVEA. Positions 294, 323, 344, and 392 each coordinate S-adenosyl-L-methionine. C419 (nucleophile) is an active-site residue.

It belongs to the class I-like SAM-binding methyltransferase superfamily. RNA M5U methyltransferase family.

This is an uncharacterized protein from Streptococcus pyogenes serotype M3 (strain ATCC BAA-595 / MGAS315).